A 79-amino-acid polypeptide reads, in one-letter code: MGGISIWQLLIIALIVILLFGTKKLRSLGGDLGGAVKGFKNAMTSETSEEEKKALEDSQTAQTSQQAEKKPESKDKEQA.

A helical membrane pass occupies residues 1 to 21 (MGGISIWQLLIIALIVILLFG). The interval 42 to 79 (AMTSETSEEEKKALEDSQTAQTSQQAEKKPESKDKEQA) is disordered. The segment covering 57–66 (DSQTAQTSQQ) has biased composition (polar residues). Over residues 67–79 (AEKKPESKDKEQA) the composition is skewed to basic and acidic residues.

It belongs to the TatA/E family. As to quaternary structure, the Tat system comprises two distinct complexes: a TatABC complex, containing multiple copies of TatA, TatB and TatC subunits, and a separate TatA complex, containing only TatA subunits. Substrates initially bind to the TatABC complex, which probably triggers association of the separate TatA complex to form the active translocon.

It is found in the cell inner membrane. Its function is as follows. Part of the twin-arginine translocation (Tat) system that transports large folded proteins containing a characteristic twin-arginine motif in their signal peptide across membranes. TatA could form the protein-conducting channel of the Tat system. The protein is Sec-independent protein translocase protein TatA of Shewanella denitrificans (strain OS217 / ATCC BAA-1090 / DSM 15013).